A 142-amino-acid chain; its full sequence is Large ribosomal subunit protein uL11 (142 aa).

It belongs to the universal ribosomal protein uL11 family. In terms of assembly, part of the ribosomal stalk of the 50S ribosomal subunit. Interacts with L10 and the large rRNA to form the base of the stalk. L10 forms an elongated spine to which L12 dimers bind in a sequential fashion forming a multimeric L10(L12)X complex. In terms of processing, one or more lysine residues are methylated.

In terms of biological role, forms part of the ribosomal stalk which helps the ribosome interact with GTP-bound translation factors. The sequence is that of Large ribosomal subunit protein uL11 from Mycobacterium sp. (strain JLS).